The sequence spans 451 residues: Probable M18 family aminopeptidase 1 (451 aa).

Zn(2+) contacts are provided by H93, H168, and H426.

Belongs to the peptidase M18 family. Requires Zn(2+) as cofactor.

This Thermotoga maritima (strain ATCC 43589 / DSM 3109 / JCM 10099 / NBRC 100826 / MSB8) protein is Probable M18 family aminopeptidase 1 (apeA).